The following is a 999-amino-acid chain: Sarcoplasmic/endoplasmic reticulum calcium ATPase 3 (999 aa).

The Cytoplasmic segment spans residues 1–48 (MEAAHSVPVQDVLSRFGVAESCGLSPEQVRRNREKYGPNELPAEERKS). The chain crosses the membrane as a helical span at residues 49–69 (LWELVLEQFEDLLVRILLMAA). The Lumenal portion of the chain corresponds to 70 to 89 (FLSFILAWFEEGEESTTAFV). The chain crosses the membrane as a helical span at residues 90–110 (EPIVIIMILIANAVVGVWQER). At 111–253 (NAESAIEALK…PEKTPLQQKL (143 aa)) the chain is on the cytoplasmic side. The chain crosses the membrane as a helical span at residues 254–273 (DEFSQQLSKVIFLVCIAVWV). The Lumenal segment spans residues 274-295 (INISHFSDPVHGGSWFRGAIYY). Residues 296-313 (FKTSVALAVAAIPEGLPA) form a helical membrane-spanning segment. Residues Val304, Ala305, Ile307, and Glu309 each contribute to the Ca(2+) site. At 314–757 (VITTCLALGT…EEGRAIYNNM (444 aa)) the chain is on the cytoplasmic side. Asp351 (4-aspartylphosphate intermediate) is an active-site residue. Residues Asp351 and Thr353 each coordinate Mg(2+). Thr353 serves as a coordination point for ATP. The interval 370 to 400 (EKVEGTQCSLHEFSITGSTYAPEGQILKDEK) is interaction with phospholamban 1. Glu442, Arg489, Lys515, Arg560, Thr625, Gly626, Asp627, Arg678, and Lys684 together coordinate ATP. Position 703 (Asp703) interacts with Mg(2+). An ATP-binding site is contributed by Asn706. The chain crosses the membrane as a helical span at residues 758-777 (KQFIRYLISSNVGEVVCIFL). Residues Asn768 and Glu771 each contribute to the Ca(2+) site. Residues 778-787 (TAILGLPEAL) are Lumenal-facing. Residues 788–808 (IPVQLLWVNLVTDGLPATALG) form a helical membrane-spanning segment. The interval 788–808 (IPVQLLWVNLVTDGLPATALG) is interaction with phospholamban 2. Residues Asn796, Thr799, and Asp800 each coordinate Ca(2+). Residues 809 to 828 (FNPPDLDIMDKLPRNPKEPL) lie on the Cytoplasmic side of the membrane. The helical transmembrane segment at 829–851 (ISGWLFFRYLAIGVYVGLATVGA) threads the bilayer. Residues 852-897 (ATWWFLYDAEGPQVSFHQLRNFMRCTEDNPIFEGVNCEIFESRYPT) are Lumenal-facing. Residues 898-917 (TMALSVLVTIEMCNALNSVS) traverse the membrane as a helical segment. Glu908 is a Ca(2+) binding site. Over 918–930 (ENQSLLRMPPWLN) the chain is Cytoplasmic. The chain crosses the membrane as a helical span at residues 931-949 (IWLLGAIVMSMALHFFILY). Residues 950–964 (VKPMPLIFQVTPLSW) lie on the Lumenal side of the membrane. Residues 965 to 985 (PQWVVVLKISLPVILLDEGLK) traverse the membrane as a helical segment. The Cytoplasmic segment spans residues 986-999 (YLSRNHLEGEEDKK).

It belongs to the cation transport ATPase (P-type) (TC 3.A.3) family. Type IIA subfamily. In terms of assembly, interacts with sarcolipin (SLN). Interacts with phospholamban (PLN). Interacts with myoregulin (MRLN). Interacts with DWORF. The cofactor is Mg(2+). In terms of tissue distribution, found in spleen, lung, intestine and brain.

The protein localises to the endoplasmic reticulum membrane. Its subcellular location is the sarcoplasmic reticulum membrane. The catalysed reaction is Ca(2+)(in) + ATP + H2O = Ca(2+)(out) + ADP + phosphate + H(+). Its activity is regulated as follows. Inhibited by sarcolipin (SLN), phospholamban (PLN) and myoregulin (MRLN). Enhanced by DWORF; DWORF increases activity by displacing sarcolipin (SLN), phospholamban (PLN) and myoregulin (MRLN). Functionally, this magnesium-dependent enzyme catalyzes the hydrolysis of ATP coupled with the transport of calcium. Transports calcium ions from the cytosol into the sarcoplasmic/endoplasmic reticulum lumen. Contributes to calcium sequestration involved in muscular excitation/contraction. This chain is Sarcoplasmic/endoplasmic reticulum calcium ATPase 3 (ATP2A3), found in Gallus gallus (Chicken).